Reading from the N-terminus, the 404-residue chain is Probable sugar efflux transporter (404 aa).

12 consecutive transmembrane segments (helical) span residues 15–35 (VITF…PVAL), 51–71 (GLII…FMLL), 85–105 (LVLF…WVLV), 109–129 (IGVA…VIRV), 137–157 (QAIG…LPLG), 168–188 (ATFA…YQLL), 209–229 (PLLL…FTAY), 245–265 (SMAT…SLLF), 276–296 (FILF…IASQ), 299–319 (WTMF…GLGL), 333–353 (VAMA…ALLG), and 363–383 (AYIG…FILV).

Belongs to the major facilitator superfamily. SotB (TC 2.A.1.2) family.

The protein resides in the cell inner membrane. Involved in the efflux of sugars. The physiological role may be the reduction of the intracellular concentration of toxic sugars or sugar metabolites. This is Probable sugar efflux transporter from Pasteurella multocida (strain Pm70).